Reading from the N-terminus, the 183-residue chain is ATP synthase subunit delta, chloroplastic (183 aa).

It belongs to the ATPase delta chain family. F-type ATPases have 2 components, F(1) - the catalytic core - and F(0) - the membrane proton channel. F(1) has five subunits: alpha(3), beta(3), gamma(1), delta(1), epsilon(1). CF(0) has four main subunits: a(1), b(1), b'(1) and c(10-14). The alpha and beta chains form an alternating ring which encloses part of the gamma chain. F(1) is attached to F(0) by a central stalk formed by the gamma and epsilon chains, while a peripheral stalk is formed by the delta, b and b' chains.

It localises to the plastid. It is found in the chloroplast thylakoid membrane. F(1)F(0) ATP synthase produces ATP from ADP in the presence of a proton or sodium gradient. F-type ATPases consist of two structural domains, F(1) containing the extramembraneous catalytic core and F(0) containing the membrane proton channel, linked together by a central stalk and a peripheral stalk. During catalysis, ATP synthesis in the catalytic domain of F(1) is coupled via a rotary mechanism of the central stalk subunits to proton translocation. Its function is as follows. This protein is part of the stalk that links CF(0) to CF(1). It either transmits conformational changes from CF(0) to CF(1) or is implicated in proton conduction. The sequence is that of ATP synthase subunit delta, chloroplastic from Cyanidium caldarium (Red alga).